We begin with the raw amino-acid sequence, 553 residues long: Phenylalanine--tRNA ligase beta subunit (553 aa).

The B5 domain occupies F273–P349. 4 residues coordinate Mg(2+): D327, D333, D336, and D337.

Belongs to the phenylalanyl-tRNA synthetase beta subunit family. Type 2 subfamily. Tetramer of two alpha and two beta subunits. It depends on Mg(2+) as a cofactor.

The protein resides in the cytoplasm. The enzyme catalyses tRNA(Phe) + L-phenylalanine + ATP = L-phenylalanyl-tRNA(Phe) + AMP + diphosphate + H(+). The protein is Phenylalanine--tRNA ligase beta subunit of Methanocella arvoryzae (strain DSM 22066 / NBRC 105507 / MRE50).